We begin with the raw amino-acid sequence, 72 residues long: Conotoxin VnMKLT2-021 (72 aa).

Residues 1 to 22 form the signal peptide; it reads MKLTCVLIVAVLFLTACQLTTA. A propeptide spanning residues 23-45 is cleaved from the precursor; it reads ASYARSERQHPDLGSSDQNSKLT. Disulfide bonds link cysteine 48/cysteine 62, cysteine 55/cysteine 66, and cysteine 61/cysteine 71.

The protein belongs to the conotoxin O1 superfamily. Expressed by the venom duct.

The protein resides in the secreted. This Conus ventricosus (Mediterranean cone) protein is Conotoxin VnMKLT2-021.